The sequence spans 300 residues: MDFLMSGLAACGACVFTNPLEVVKTRMQLQGELQAPGTYQRHYRNVFHAFITIGKVDGLAALQKGLAPALLYQFLMNGIRLGTYGLAEAGGYLHTAEGTHSPARSAAAGAMAGVMGAYLGSPIYMVKTHLQAQAASEIAVGHQYKHQGMFQALTEIGQKHGLVGLWRGALGGLPRVIVGSSTQLCTFSSTKDLLSQWEIFPPQSWKLALVAAMMSGIAVVLAMAPFDVACTRLYNQPTDAQGKGLMYRGILDALLQTARTEGIFGMYKGIGASYFRLGPHTILSLFFWDQLRSLYYTDTK.

Solcar repeat units follow at residues 1 to 90, 100 to 193, and 203 to 294; these read MDFL…AEAG, HSPA…TKDL, and QSWK…LRSL. A run of 6 helical transmembrane segments spans residues 38-58, 59-79, 91-119, 169-190, 205-225, and 277-300; these read TYQRHYRNVFHAFITIGKVDG, LAALQKGLAPALLYQFLMNGI, GYLHTAEGTHSPARSAAAGAMAGVMGAYL, ALGGLPRVIVGSSTQLCTFSST, WKLALVAAMMSGIAVVLAMAP, and LGPHTILSLFFWDQLRSLYYTDTK.

It belongs to the mitochondrial carrier (TC 2.A.29) family.

The protein localises to the mitochondrion inner membrane. The catalysed reaction is a dicarboxylate(in) + sulfate(out) = a dicarboxylate(out) + sulfate(in). Functionally, putative antiporter that exchanges dicarboxylates and sulfur oxoanions across the inner membrane of mitochondria. The polypeptide is Solute carrier family 25 member 35 (SLC25A35) (Homo sapiens (Human)).